Reading from the N-terminus, the 139-residue chain is Bilirubin-inducible fluorescent protein UnaG (139 aa).

Residues Asn-57, Thr-61, Ser-80, Arg-112, and 132–134 each bind (4Z,15Z)-bilirubin IXalpha; that span reads RSY.

Belongs to the calycin superfamily. Fatty-acid binding protein (FABP) family. As to quaternary structure, monomer. As to expression, detected in small-diameter muscle fibers from the white muscle layer from juvenile animals (glass eels) (at protein level). Detected in small-diameter muscle fibers from juvenile animals (glass eels).

Its subcellular location is the cytoplasm. Functionally, beta-barrel protein that binds unconjugated bilirubin with high affinity. Excitation of the bilirubin-bound protein gives rise to green fluorescence, both under normoxia and hypoxia. The apoprotein is not fluorescent. Does not emit fluorescence in the presence of ditauro-bilirubin, urobilin or biliverdin. This chain is Bilirubin-inducible fluorescent protein UnaG, found in Anguilla japonica (Japanese eel).